A 206-amino-acid chain; its full sequence is Triosephosphate isomerase (206 aa).

Residue H76 is the Electrophile of the active site. The Proton acceptor role is filled by E146.

It belongs to the triosephosphate isomerase family. Homodimer.

The catalysed reaction is D-glyceraldehyde 3-phosphate = dihydroxyacetone phosphate. It participates in carbohydrate biosynthesis; gluconeogenesis. The protein operates within carbohydrate degradation; glycolysis; D-glyceraldehyde 3-phosphate from glycerone phosphate: step 1/1. The polypeptide is Triosephosphate isomerase (Tpi) (Aedes togoi (Mosquito)).